A 174-amino-acid chain; its full sequence is MTSSLPESIDGLYRFSSSRGSVVSTHLGGRFPSINPDTLWSKLNECDKCVFFRNMVSKSLYATDYNNANTDVKTIFVPRDSRNNFFNIQNEITPNDFVSSLTIPGQLFIMPKSSPINIKVQNKNKEYLSINIKNVNKGGQAFVQVLDRLWIIVVPNIMCTNGIIHLMEEVYAFD.

An FAS1 domain is found at 36–171 (PDTLWSKLNE…GIIHLMEEVY (136 aa)).

This Acheta domesticus (House cricket) protein is Putative FAS1 domain-containing protein 096L.